The sequence spans 1543 residues: ABC multidrug transporter AFR1 (1543 aa).

The segment at 1 to 85 is disordered; that stretch reads MSAAGVPAEL…DGKQKRLPAD (85 aa). A compositionally biased stretch (polar residues) spans 18–41; sequence TATTQNPSGLANSQVTSGPVSSAT. Basic and acidic residues predominate over residues 62–83; that stretch reads AVEAEKAEAIDAAGDGKQKRLP. An N-linked (GlcNAc...) asparagine glycan is attached at asparagine 117. Positions 119 to 157 are disordered; it reads SQRSQHELHRPTTRHSVRSSFSRKDRVVSRLTQDDAEKA. The span at 140–157 shows a compositional bias: basic and acidic residues; sequence SRKDRVVSRLTQDDAEKA. Residues asparagine 208 and asparagine 398 are each glycosylated (N-linked (GlcNAc...) asparagine). The ABC transporter 1 domain maps to 222–474; that stretch reads IKVLGIFGFN…MIGLGYRDLP (253 aa). Transmembrane regions (helical) follow at residues 585–605, 619–639, 670–690, 695–715, and 727–747; these read FGIS…GSVY, GGLL…ELPS, VPYN…MGGL, GAFF…SAFF, and VAAR…GYMI. A glycan (N-linked (GlcNAc...) asparagine) is linked at asparagine 823. Residues 845 to 865 form a helical membrane-spanning segment; sequence FGILLGFFTFFMFLQMLFIEV. The 243-residue stretch at 918–1160 folds into the ABC transporter 2 domain; the sequence is FTWEGLSYTV…VLIDYLERNG (243 aa). Residue 954–961 coordinates ATP; that stretch reads GASGAGKT. N-linked (GlcNAc...) asparagine glycosylation occurs at asparagine 1223. 6 consecutive transmembrane segments (helical) span residues 1254–1274, 1285–1305, 1336–1356, 1366–1386, 1391–1411, and 1517–1537; these read WTRL…FLQL, VFAI…IEPQ, MPYS…GVGF, FFLM…AVAA, ILIA…FCGV, and FGIF…AARF.

It belongs to the ABC transporter superfamily. ABCG family. PDR (TC 3.A.1.205) subfamily.

It localises to the cell membrane. The catalysed reaction is itraconazole(in) + ATP + H2O = itraconazole(out) + ADP + phosphate + H(+). The enzyme catalyses voriconazole(in) + ATP + H2O = voriconazole(out) + ADP + phosphate + H(+). It catalyses the reaction fluconazole(in) + ATP + H2O = fluconazole(out) + ADP + phosphate + H(+). Major pleiotropic ABC efflux transporter that confers resistance to structurally and functionally unrelated compounds including azoles such as fluconazole (FLC), itraconazole (ITC), posaconazole (POS), and voriconazole (VRC). Is also able to efflux the eukaryote protein synthesis inhibitor cycloheximide (CHX). The protein is ABC multidrug transporter AFR1 of Cryptococcus neoformans var. grubii serotype A (strain H99 / ATCC 208821 / CBS 10515 / FGSC 9487) (Filobasidiella neoformans var. grubii).